The following is a 1169-amino-acid chain: Chromosome partition protein Smc (1169 aa).

32–39 contributes to the ATP binding site; the sequence is PNGCGKSN. Coiled coils occupy residues 170–507 and 659–1030; these read ISKY…ALGE and REQQ…FQSL.

The protein belongs to the SMC family. As to quaternary structure, homodimer.

The protein localises to the cytoplasm. Functionally, required for chromosome condensation and partitioning. The polypeptide is Chromosome partition protein Smc (Coxiella burnetii (strain RSA 493 / Nine Mile phase I)).